The primary structure comprises 192 residues: Small ribosomal subunit protein eS7 (192 aa).

This sequence belongs to the eukaryotic ribosomal protein eS7 family.

This Culex quinquefasciatus (Southern house mosquito) protein is Small ribosomal subunit protein eS7 (RpS7).